We begin with the raw amino-acid sequence, 139 residues long: Maintenance of telomere capping protein 7 (139 aa).

The next 2 helical transmembrane spans lie at 13–33 (SHHV…FVLL) and 42–62 (FYFL…FVFI). The tract at residues 94–121 (RSVANPALPPQKKKKKKKKGTLRTGEVE) is disordered. A compositionally biased stretch (basic residues) spans 104 to 114 (QKKKKKKKKGT).

It localises to the membrane. May be involved in telomere capping. This is Maintenance of telomere capping protein 7 (MTC7) from Saccharomyces cerevisiae (strain ATCC 204508 / S288c) (Baker's yeast).